The chain runs to 283 residues: Bifunctional protein FolD (283 aa).

NADP(+) contacts are provided by residues 166-168 (GRS), S191, and T232.

This sequence belongs to the tetrahydrofolate dehydrogenase/cyclohydrolase family. As to quaternary structure, homodimer.

The enzyme catalyses (6R)-5,10-methylene-5,6,7,8-tetrahydrofolate + NADP(+) = (6R)-5,10-methenyltetrahydrofolate + NADPH. The catalysed reaction is (6R)-5,10-methenyltetrahydrofolate + H2O = (6R)-10-formyltetrahydrofolate + H(+). The protein operates within one-carbon metabolism; tetrahydrofolate interconversion. Catalyzes the oxidation of 5,10-methylenetetrahydrofolate to 5,10-methenyltetrahydrofolate and then the hydrolysis of 5,10-methenyltetrahydrofolate to 10-formyltetrahydrofolate. The sequence is that of Bifunctional protein FolD from Halothermothrix orenii (strain H 168 / OCM 544 / DSM 9562).